A 412-amino-acid chain; its full sequence is Isocitrate dehydrogenase [NADP] (412 aa).

Thr-100 lines the NADP(+) pocket. D-threo-isocitrate-binding residues include Ser-109, Asn-111, Arg-115, Arg-125, and Arg-149. Asp-301 serves as a coordination point for Mg(2+). NADP(+) is bound by residues His-333 to Tyr-339, Asn-346, Tyr-385, and Arg-389.

It belongs to the isocitrate and isopropylmalate dehydrogenases family. As to quaternary structure, homodimer. Requires Mg(2+) as cofactor. The cofactor is Mn(2+).

It carries out the reaction D-threo-isocitrate + NADP(+) = 2-oxoglutarate + CO2 + NADPH. Catalyzes the oxidative decarboxylation of isocitrate to 2-oxoglutarate and carbon dioxide with the concomitant reduction of NADP(+). NAD(+) can replace NADP(+) with low efficiency. The polypeptide is Isocitrate dehydrogenase [NADP] (Archaeoglobus fulgidus (strain ATCC 49558 / DSM 4304 / JCM 9628 / NBRC 100126 / VC-16)).